The primary structure comprises 174 residues: uncharacterized protein (174 aa).

This is an uncharacterized protein from Bacillus subtilis (strain 168).